The following is a 264-amino-acid chain: Short-chain dehydrogenase/reductase ucsE (264 aa).

Residues 13–32 traverse the membrane as a helical segment; that stretch reads LVVVVGGTSGLGFAVAQAAV. Residues L23, S43, and D74 each contribute to the NADP(+) site. The N-linked (GlcNAc...) asparagine glycan is linked to N125. Residues R130 and K139 each contribute to the NADP(+) site. The active-site Proton donor is the S157. V202 and T204 together coordinate NADP(+).

The protein belongs to the short-chain dehydrogenases/reductases (SDR) family. It depends on NADP(+) as a cofactor.

It is found in the membrane. Its pathway is mycotoxin biosynthesis. In terms of biological role, short-chain dehydrogenase/reductase; part of the gene cluster that mediates the biosynthesis of UCS1025A, a member of the pyrrolizidinone family that acts as a strong telomerase inhibitor and displays potent antibacterial and antitumor properties. These compounds share a hemiaminal-containing pyrrolizidinone core fused with a gamma-lactone, giving a furopyrrolizidine that is connected to a decalin fragment. The polyketide synthase module (PKS) of the PKS-NRPS ucsA is responsible for the synthesis of the polyketide backbone via the condensation of an acetyl-CoA starter unit with 6 malonyl-CoA units. The downstream nonribosomal peptide synthetase (NRPS) module then amidates the carboxyl end of the polyketide with a 2S,3S-methylproline derived from L-isoleucine by the 2-oxoglutarate-dependent dioxygenase ucsF which converts L-isoleucine to (4S,5S)-4-methylpyrroline-5-carboxylate that is further converted to 2S,3S-methylproline by the pyrroline-5-carboxylate reductase ucsG. Reductive release of the completed aminoacyl polyketide from the assembly line can form the 3-pyrrolin-2-one structure via an intramolecular Knoevenagel reaction. Because ucsA lacks a designated enoylreductase (ER) domain, the required activity is provided the enoyl reductase ucsL. This keto acyclic precursor is the substrate of the Diels-Alderase ucsH, that catalyzes the Diels-Alder cycloaddition. Oxidation of the 3S-methyl group to a carboxylate by the cytochrome P450 monooxygenase ucsK allows an oxa-Michael cyclization that might involve the reductase/dehydrogenase ucsI and which furnishes the furopyrrolizidine. The oxidase ucsJ likely plays a critical role in stereoselective reduction of the C5-C6 double bond to afford the required R-configured carboxylate group. Further enolization and oxidation at C5 by an unidentified enzyme affords the last intermediate that can undergo oxa-Michael cyclization to yield UCS1025A. This is Short-chain dehydrogenase/reductase ucsE from Acremonium sp.